The primary structure comprises 305 residues: MDHEEIPSTPSTPATTPGTPGAPLFGGFEGKRNGHNGRYTPKSLLKSCKCFSVDNEWALEDGRLPPVTCSLPPPNVSLYRKLGAEFVGTLILIFAGTATAIVNQKTDGAETLIGCAASAGLAVMIVILSTGHISGAHLNPAVTIAFAALKHFPWKHVPVYIGAQVMASVSAAFALKAVFEPTMSGGVTVPTVGLSQAFALEFIISFNLMFVVTAVATDTRAVGELAGIAVGATVMLNILIAGPATSASMNPVRTLGPAIAANNYRAIWVYLTAPILGALIGAGTYTIVKLPEEDEAPKERRSFRR.

Positions 1 to 30 (MDHEEIPSTPSTPATTPGTPGAPLFGGFEG) are disordered. Low complexity predominate over residues 7–23 (PSTPSTPATTPGTPGAP). Helical transmembrane passes span 82-102 (LGAE…TAIV) and 111-131 (TLIG…LSTG). An NPA 1 motif is present at residues 139–141 (NPA). 3 consecutive transmembrane segments (helical) span residues 159–179 (VYIG…KAVF), 194–214 (LSQA…VVTA), and 221–241 (AVGE…ILIA). The NPA 2 signature appears at 250–252 (NPV). Residues 267-287 (IWVYLTAPILGALIGAGTYTI) form a helical membrane-spanning segment. Residue serine 302 is modified to Phosphoserine.

This sequence belongs to the MIP/aquaporin (TC 1.A.8) family. NIP (TC 1.A.8.12) subfamily. Expressed in roots.

It is found in the membrane. In terms of biological role, transports glycerol, urea and formamide, in Xenopus laevis oocytes. Very low water transport activity. This is Aquaporin NIP6-1 (NIP6-1) from Arabidopsis thaliana (Mouse-ear cress).